Consider the following 133-residue polypeptide: MSRDFSREKRLLTPRHFKAVFDSPTGKVPGKNLLLLARNNDLDHPRLGLVIGKKSVKLSVERNRLKRLMRESFRQHQDSLVGWDIVIVARKGLGDVENPELIQYFGKLWKRLARSRPIPEEKSEPAGVDSPDA.

This sequence belongs to the RnpA family. As to quaternary structure, consists of a catalytic RNA component (M1 or rnpB) and a protein subunit.

It catalyses the reaction Endonucleolytic cleavage of RNA, removing 5'-extranucleotides from tRNA precursor.. Functionally, RNaseP catalyzes the removal of the 5'-leader sequence from pre-tRNA to produce the mature 5'-terminus. It can also cleave other RNA substrates such as 4.5S RNA. The protein component plays an auxiliary but essential role in vivo by binding to the 5'-leader sequence and broadening the substrate specificity of the ribozyme. The chain is Ribonuclease P protein component from Pseudomonas savastanoi pv. phaseolicola (strain 1448A / Race 6) (Pseudomonas syringae pv. phaseolicola (strain 1448A / Race 6)).